A 367-amino-acid polypeptide reads, in one-letter code: Leu/Ile/Val-binding protein BraC3 (367 aa).

A signal peptide spans 1–22 (MTLKTLTATLVASLAFAPLAHA).

The protein belongs to the leucine-binding protein family. The complex is composed of two ATP-binding proteins (BraF and BraG), two transmembrane proteins (BraD and BraE) and a solute-binding protein (BraC or BraC3).

Its subcellular location is the periplasm. Functionally, part of the ABC transporter complex BraDEFGC/C3 involved in transport of branched-chain amino acids Leu, Ile and Val (LIV). Essential for the development of bacteroids, the differentiated legume-symbiotic forms of this bacterium, and for the effective N(2) fixation by them. The sequence is that of Leu/Ile/Val-binding protein BraC3 from Rhizobium johnstonii (strain DSM 114642 / LMG 32736 / 3841) (Rhizobium leguminosarum bv. viciae).